The following is a 188-amino-acid chain: Protein TIFY 9 (188 aa).

The segment at 20–41 (DADDRHAKSGGSSASSSSSIRG) is disordered. Residues 28–38 (SGGSSASSSSS) are compositionally biased toward low complexity. The region spanning 80-114 (AAAAAAPMTLFYNGSVAVFDVSHDKAEAIMRMATE) is the Tify domain. Positions 135-160 (PLTRTKSLQRFLSKRKERLTSLGPYQ) match the Jas motif. The tract at residues 156-188 (LGPYQVGGPAAVGATTSTTTKSFLAKEEEHTAS) is disordered. Residues 179-188 (LAKEEEHTAS) show a composition bias toward basic and acidic residues.

This sequence belongs to the TIFY/JAZ family. Post-translationally, ubiquitinated. Targeted for degradation by the SCF(COI1) E3 ubiquitin ligase-proteasome pathway during jasmonate signaling.

Functionally, repressor of jasmonate responses. In Oryza sativa subsp. indica (Rice), this protein is Protein TIFY 9.